The chain runs to 134 residues: MENKKTIYFLCTGNSCRSQMAEAWGKQYLGDKWNVYSAGIEVHGVNPNAIKAMNEVNIDITNQTSDIIDANILNRADLVVTLCSHADSVCPSTPPDVNRVHWGFDDPAGKEWSEFQRVRDEIGERIKRFSETGE.

Catalysis depends on nucleophile residues Cys-11, Cys-83, and Cys-90. 2 cysteine pairs are disulfide-bonded: Cys-11–Cys-83 and Cys-83–Cys-90.

Belongs to the low molecular weight phosphotyrosine protein phosphatase family. Thioredoxin-coupled ArsC subfamily.

The protein localises to the cytoplasm. It catalyses the reaction arsenate + [thioredoxin]-dithiol + H(+) = arsenite + [thioredoxin]-disulfide + H2O. Catalyzes the reduction of arsenate [As(V)] to arsenite [As(III)]. The polypeptide is Arsenate reductase (Bacillus cereus (strain ZK / E33L)).